Consider the following 72-residue polypeptide: Toxin Acra II-2 (72 aa).

Residues 3–67 (VPGNYPLNTN…VWNAAKNYCK (65 aa)) enclose the LCN-type CS-alpha/beta domain. 3 disulfide bridges follow: Cys-18–Cys-41, Cys-27–Cys-46, and Cys-31–Cys-48.

The protein belongs to the long (3 C-C) scorpion toxin superfamily. Sodium channel inhibitor family. Beta subfamily. In terms of tissue distribution, expressed by the venom gland.

The protein localises to the secreted. Its function is as follows. Binds to sodium channels (Nav) and affects the channel activation process. This is Toxin Acra II-2 from Androctonus crassicauda (Arabian fat-tailed scorpion).